The primary structure comprises 240 residues: Probable transcriptional regulatory protein HPG27_148 (240 aa).

This sequence belongs to the TACO1 family.

It localises to the cytoplasm. The polypeptide is Probable transcriptional regulatory protein HPG27_148 (Helicobacter pylori (strain G27)).